Reading from the N-terminus, the 1256-residue chain is Bifunctional autolysin (1256 aa).

The first 29 residues, 1-29 (MAKKFNYKLPSMVALTLVGSAVTAHQVQA), serve as a signal peptide directing secretion. Residues 103-138 (GDTRANQSATTNNTQPVAKSTSTTAPKTNTNVTNAG) are compositionally biased toward polar residues. 3 disordered regions span residues 103–151 (GDTR…NSEN), 173–219 (AAAP…KYKP), and 419–440 (TQST…PSTG). 2 stretches are compositionally biased toward low complexity: residues 173–196 (AAAP…KVTT) and 421–439 (STTT…KPST). The N-acetylmuramoyl-L-alanine amidase stretch occupies residues 199–775 (ASAQPRSVAA…AVAQPKTAVK (577 aa)). GW domains are found at residues 443–517 (TVAA…YNTA), 519–593 (SPVN…DTAK), 612–686 (TVSS…YNNA), 688–762 (SPVN…VPAA), 784–859 (TTQT…VQNL), 861–936 (KEVK…APTA), and 943–1017 (AAKD…KELI). The interval 776-1256 (AYTVTKPQTT…GKYFDIPQYK (481 aa)) is endo-beta-N-acetylglucosaminidase.

This sequence in the N-terminal section; belongs to the N-acetylmuramoyl-L-alanine amidase 2 family. In the C-terminal section; belongs to the glycosyl hydrolase 73 family. In terms of assembly, oligomer; forms a ring structure at the cell surface which is important for efficient partitioning of daughter cells after cell division. In terms of processing, undergoes proteolytic processing to generate the two extracellular lytic enzymes, probably at the septal region on the cell surface.

It localises to the secreted. It carries out the reaction Hydrolyzes the link between N-acetylmuramoyl residues and L-amino acid residues in certain cell-wall glycopeptides.. The enzyme catalyses an N(4)-(oligosaccharide-(1-&gt;3)-[oligosaccharide-(1-&gt;6)]-beta-D-Man-(1-&gt;4)-beta-D-GlcNAc-(1-&gt;4)-alpha-D-GlcNAc)-L-asparaginyl-[protein] + H2O = an oligosaccharide-(1-&gt;3)-[oligosaccharide-(1-&gt;6)]-beta-D-Man-(1-&gt;4)-D-GlcNAc + N(4)-(N-acetyl-beta-D-glucosaminyl)-L-asparaginyl-[protein]. Its function is as follows. Endohydrolysis of the di-N-acetylchitobiosyl unit in high-mannose glycopeptides and glycoproteins containing the -[(Man)5(GlcNAc)2]-Asn structure. One N-acetyl-D-glucosamine residue remains attached to the protein; the rest of the oligosaccharide is released intact. Cleaves the peptidoglycan connecting the daughter cells at the end of the cell division cycle, resulting in the separation of the two newly divided cells. Acts as an autolysin in penicillin-induced lysis. The chain is Bifunctional autolysin (atl) from Staphylococcus aureus (strain MW2).